Consider the following 79-residue polypeptide: Acyl carrier protein (79 aa).

Residues 2–77 (DNIEQRVKKI…QAIDYARANV (76 aa)) enclose the Carrier domain. An O-(pantetheine 4'-phosphoryl)serine modification is found at S37.

Belongs to the acyl carrier protein (ACP) family. Post-translationally, 4'-phosphopantetheine is transferred from CoA to a specific serine of apo-ACP by AcpS. This modification is essential for activity because fatty acids are bound in thioester linkage to the sulfhydryl of the prosthetic group.

Its subcellular location is the cytoplasm. The protein operates within lipid metabolism; fatty acid biosynthesis. In terms of biological role, carrier of the growing fatty acid chain in fatty acid biosynthesis. This Burkholderia cenocepacia (strain HI2424) protein is Acyl carrier protein.